The following is a 76-amino-acid chain: Sulfur carrier protein TusA (76 aa).

Cys-15 (cysteine persulfide intermediate) is an active-site residue.

The protein belongs to the sulfur carrier protein TusA family. As to quaternary structure, mostly a monomer, a small portion forms homodimer via intermolecular disulfide bonds. Tightly interacts with DsrEFH.

Its subcellular location is the cytoplasm. The protein operates within energy metabolism; sulfur metabolism. Sulfur carrier protein involved in sulfur trafficking for oxidative dissimilatory sulfur metabolism. Component of a sulfur relay system that starts with the sulfur-mobilizing rhodanese-like protein Rhd_2599 (Alvin_2599), which transfers the sulfur from a low-molecular-weight thiol, maybe glutathione, to the TusA protein (Alvin_2600); TusA serves as the sulfur donor for DsrEFH, which persulfurates DsrC; persulfurated DsrC very probably serves as a direct substrate for reverse-acting sulfite reductase, DsrAB. TusA seems to be not exclusively dedicated to sulfur oxidation and may have other important roles in the cell. Might also act as a sulfur mediator required for 2-thiouridine formation of tRNA. The sequence is that of Sulfur carrier protein TusA from Allochromatium vinosum (strain ATCC 17899 / DSM 180 / NBRC 103801 / NCIMB 10441 / D) (Chromatium vinosum).